Consider the following 363-residue polypeptide: Glycerol-3-phosphate dehydrogenase [NAD(+)], cytoplasmic (363 aa).

NAD(+) contacts are provided by residues 11-16 (GSGNWG), phenylalanine 98, lysine 121, and alanine 155. Position 121 (lysine 121) interacts with substrate. Lysine 206 (proton acceptor) is an active-site residue. Residues arginine 270 and glutamine 299 each coordinate NAD(+). 270-271 (RN) serves as a coordination point for substrate.

The protein belongs to the NAD-dependent glycerol-3-phosphate dehydrogenase family. Homodimer. In terms of tissue distribution, isoform GPDH-1 is predominant in thorax and isoform GPDH-3 in abdomen.

Its subcellular location is the cytoplasm. The enzyme catalyses sn-glycerol 3-phosphate + NAD(+) = dihydroxyacetone phosphate + NADH + H(+). It functions in the pathway phospholipid metabolism; alpha-glycerophosphate cycle. This Drosophila melanogaster (Fruit fly) protein is Glycerol-3-phosphate dehydrogenase [NAD(+)], cytoplasmic.